The following is a 252-amino-acid chain: Glycerol-3-phosphate acyltransferase (252 aa).

A run of 6 helical transmembrane segments spans residues Ser6 to Gly26, Ile66 to Ile86, Ala104 to Phe124, Ile140 to Ile160, Met164 to Ile184, and Val204 to Tyr224.

The protein belongs to the PlsY family. Probably interacts with PlsX.

Its subcellular location is the cell membrane. The catalysed reaction is an acyl phosphate + sn-glycerol 3-phosphate = a 1-acyl-sn-glycero-3-phosphate + phosphate. Its pathway is lipid metabolism; phospholipid metabolism. Catalyzes the transfer of an acyl group from acyl-phosphate (acyl-PO(4)) to glycerol-3-phosphate (G3P) to form lysophosphatidic acid (LPA). This enzyme utilizes acyl-phosphate as fatty acyl donor, but not acyl-CoA or acyl-ACP. This chain is Glycerol-3-phosphate acyltransferase, found in Ureaplasma urealyticum serovar 10 (strain ATCC 33699 / Western).